We begin with the raw amino-acid sequence, 879 residues long: Valine--tRNA ligase (879 aa).

The 'HIGH' region motif lies at 45-55 (PNVTGKLHLGH). The 'KMSKS' region signature appears at 521 to 525 (KMSKS). ATP is bound at residue lysine 524. A coiled-coil region spans residues 806-879 (LTELVNVDEE…ERMKELKESK (74 aa)).

Belongs to the class-I aminoacyl-tRNA synthetase family. ValS type 1 subfamily. As to quaternary structure, monomer.

It localises to the cytoplasm. It catalyses the reaction tRNA(Val) + L-valine + ATP = L-valyl-tRNA(Val) + AMP + diphosphate. Functionally, catalyzes the attachment of valine to tRNA(Val). As ValRS can inadvertently accommodate and process structurally similar amino acids such as threonine, to avoid such errors, it has a 'posttransfer' editing activity that hydrolyzes mischarged Thr-tRNA(Val) in a tRNA-dependent manner. The chain is Valine--tRNA ligase from Lactobacillus johnsonii (strain CNCM I-12250 / La1 / NCC 533).